The sequence spans 173 residues: RNA polymerase sigma factor YlaC (173 aa).

It belongs to the sigma-70 factor family. ECF subfamily.

In terms of biological role, sigma factors are initiation factors that promote the attachment of RNA polymerase to specific initiation sites and are then released. This sigma factor contributes to oxidative stress resistance. In Bacillus subtilis (strain 168), this protein is RNA polymerase sigma factor YlaC (ylaC).